The chain runs to 721 residues: uncharacterized protein (721 aa).

The helical transmembrane segment at 6 to 26 threads the bilayer; it reads QLIFVNFYVILIIWWFVMGIL. 308–315 serves as a coordination point for ATP; sequence GGTGSGKT.

It belongs to the GSP E family. This protein undergoes a protein self splicing that involves a post-translational excision of the intervening region (intein) followed by peptide ligation.

It localises to the membrane. This is an uncharacterized protein from Methanocaldococcus jannaschii (strain ATCC 43067 / DSM 2661 / JAL-1 / JCM 10045 / NBRC 100440) (Methanococcus jannaschii).